The primary structure comprises 126 residues: Large ribosomal subunit protein bL17 (126 aa).

This sequence belongs to the bacterial ribosomal protein bL17 family. As to quaternary structure, part of the 50S ribosomal subunit. Contacts protein L32.

This chain is Large ribosomal subunit protein bL17, found in Coxiella burnetii (strain CbuK_Q154) (Coxiella burnetii (strain Q154)).